An 84-amino-acid polypeptide reads, in one-letter code: Large ribosomal subunit protein eL34 (84 aa).

Belongs to the eukaryotic ribosomal protein eL34 family.

This chain is Large ribosomal subunit protein eL34, found in Pyrobaculum islandicum (strain DSM 4184 / JCM 9189 / GEO3).